We begin with the raw amino-acid sequence, 318 residues long: Transaldolase (318 aa).

Catalysis depends on lysine 132, which acts as the Schiff-base intermediate with substrate.

Belongs to the transaldolase family. Type 1 subfamily. In terms of assembly, homodimer.

The protein resides in the cytoplasm. The enzyme catalyses D-sedoheptulose 7-phosphate + D-glyceraldehyde 3-phosphate = D-erythrose 4-phosphate + beta-D-fructose 6-phosphate. It participates in carbohydrate degradation; pentose phosphate pathway; D-glyceraldehyde 3-phosphate and beta-D-fructose 6-phosphate from D-ribose 5-phosphate and D-xylulose 5-phosphate (non-oxidative stage): step 2/3. Transaldolase is important for the balance of metabolites in the pentose-phosphate pathway. In Shewanella piezotolerans (strain WP3 / JCM 13877), this protein is Transaldolase.